We begin with the raw amino-acid sequence, 102 residues long: Large ribosomal subunit protein uL23 (102 aa).

The protein belongs to the universal ribosomal protein uL23 family. Part of the 50S ribosomal subunit. Contacts protein L29, and trigger factor when it is bound to the ribosome.

Its function is as follows. One of the early assembly proteins it binds 23S rRNA. One of the proteins that surrounds the polypeptide exit tunnel on the outside of the ribosome. Forms the main docking site for trigger factor binding to the ribosome. The polypeptide is Large ribosomal subunit protein uL23 (Methylobacillus flagellatus (strain ATCC 51484 / DSM 6875 / VKM B-1610 / KT)).